The primary structure comprises 432 residues: MTDIIDDLQWRGLIAQTTDLDDLRKALADGPVTLYCGFDPTAGSLHVGHLTQALTLARFQRAGHRPIALVGGATGMIGDPKPNAERTLNSPETIRQWVGNLKRQLSSFLEFTPEGAEPKPTDALLLDNAEWLGKLTAIGLLRDIGKHFSINQMLARETVKTRLEGAGMSYTEFSYVLLQSYDYVELYRRHGCTLQIGGSDQWGNITAGLDLIRRMEGNEPHGPAHALTTTLLTKADGTKFGKTESGAVWLDPELTSPYAFYQFWFNSDDRDIPRYLRIFSFRSREEIEELEQKTIERPAERAAQRALAEELTTLVHGEQECRNVIEASKALFGHGTLADLNPDTLGAALKEVPHVELSGTVRELPPLVDLFASTGLVPSKSAARRTIQEGGAYLNNAKVTDIEARVSEADLLHGRYLVLRRGKRNVGGVILR.

Tyr35 contributes to the L-tyrosine binding site. The short motif at 40-49 (PTAGSLHVGH) is the 'HIGH' region element. L-tyrosine-binding residues include Tyr175 and Gln179. A 'KMSKS' region motif is present at residues 239–243 (KFGKT). Lys242 contributes to the ATP binding site. The region spanning 365 to 422 (PPLVDLFASTGLVPSKSAARRTIQEGGAYLNNAKVTDIEARVSEADLLHGRYLVLRRG) is the S4 RNA-binding domain.

Belongs to the class-I aminoacyl-tRNA synthetase family. TyrS type 1 subfamily. As to quaternary structure, homodimer.

It localises to the cytoplasm. It carries out the reaction tRNA(Tyr) + L-tyrosine + ATP = L-tyrosyl-tRNA(Tyr) + AMP + diphosphate + H(+). Functionally, catalyzes the attachment of tyrosine to tRNA(Tyr) in a two-step reaction: tyrosine is first activated by ATP to form Tyr-AMP and then transferred to the acceptor end of tRNA(Tyr). The polypeptide is Tyrosine--tRNA ligase (Thermobifida fusca (strain YX)).